A 166-amino-acid polypeptide reads, in one-letter code: Ureidoglycolate lyase (166 aa).

It belongs to the ureidoglycolate lyase family. As to quaternary structure, homodimer. Ni(2+) serves as cofactor.

It catalyses the reaction (S)-ureidoglycolate = urea + glyoxylate. The protein operates within nitrogen metabolism; (S)-allantoin degradation. Its function is as follows. Catalyzes the catabolism of the allantoin degradation intermediate (S)-ureidoglycolate, generating urea and glyoxylate. Involved in the utilization of allantoin as nitrogen source. This is Ureidoglycolate lyase from Azotobacter vinelandii (strain DJ / ATCC BAA-1303).